The sequence spans 121 residues: Large ribosomal subunit protein uL14 (121 aa).

This sequence belongs to the universal ribosomal protein uL14 family. In terms of assembly, part of the 50S ribosomal subunit. Forms a cluster with proteins L3 and L19. In the 70S ribosome, L14 and L19 interact and together make contacts with the 16S rRNA in bridges B5 and B8.

Its function is as follows. Binds to 23S rRNA. Forms part of two intersubunit bridges in the 70S ribosome. This is Large ribosomal subunit protein uL14 from Phocaeicola vulgatus (strain ATCC 8482 / DSM 1447 / JCM 5826 / CCUG 4940 / NBRC 14291 / NCTC 11154) (Bacteroides vulgatus).